A 634-amino-acid polypeptide reads, in one-letter code: DNA-directed RNA polymerase subunit gamma (634 aa).

The Zn(2+) site is built by C74, C76, C89, and C92. 3 residues coordinate Mg(2+): D471, D473, and D475.

It belongs to the RNA polymerase beta' chain family. RpoC1 subfamily. As to quaternary structure, in cyanobacteria the RNAP catalytic core is composed of 2 alpha, 1 beta, 1 beta', 1 gamma and 1 omega subunit. When a sigma factor is associated with the core the holoenzyme is formed, which can initiate transcription. Mg(2+) serves as cofactor. It depends on Zn(2+) as a cofactor.

It carries out the reaction RNA(n) + a ribonucleoside 5'-triphosphate = RNA(n+1) + diphosphate. In terms of biological role, DNA-dependent RNA polymerase catalyzes the transcription of DNA into RNA using the four ribonucleoside triphosphates as substrates. In Prochlorococcus marinus (strain MIT 9515), this protein is DNA-directed RNA polymerase subunit gamma.